The chain runs to 1692 residues: Protein TOPAZ1 (1692 aa).

Disordered regions lie at residues 1-135 (MRRP…PGLD), 600-629 (ELSR…TGNK), and 894-919 (EPNV…EPSD). Positions 31–40 (GAAGGCGPEA) are enriched in gly residues. Residues 95 to 116 (SDPRGLEAAKEAELPLQTERHT) show a composition bias toward basic and acidic residues. Polar residues predominate over residues 608–627 (VISNTTEDTQLTSETQSLTG). The span at 902–919 (QSTDSKYMETPVKKEPSD) shows a compositional bias: basic and acidic residues.

The protein localises to the cytoplasm. Its subcellular location is the cytosol. Its function is as follows. Important for normal spermatogenesis and male fertility. Specifically required for progression to the post-meiotic stages of spermatocyte development. Seems to be necessary for normal expression levels of a number of testis-expressed gene transcripts, although its role in this process is unclear. The protein is Protein TOPAZ1 (TOPAZ1) of Homo sapiens (Human).